A 254-amino-acid chain; its full sequence is Inner membrane protein YabI (254 aa).

The Periplasmic portion of the chain corresponds to 1–7 (MQALLEH). 2 consecutive transmembrane segments (helical) span residues 8–28 (FITQ…FLES) and 29–49 (LALV…GALI). The Periplasmic portion of the chain corresponds to 50–58 (GSGELSFWH). The helical transmembrane segment at 59–79 (AWLAGIIGCLMGDWISFWLGW) threads the bilayer. Over 80-144 (RFKKPLHRWS…LPVAKFITPN (65 aa)) the chain is Cytoplasmic. The chain crosses the membrane as a helical span at residues 145-165 (IIGCLLWPPFYFLPGILAGAA). Residues 166 to 178 (IDIPAGMQSGEFK) are Periplasmic-facing. Residues 179 to 199 (WLLLATAVFLWVGGWLCWRLW) traverse the membrane as a helical segment. Residues 200–215 (RSGKATDRLSHYLSRG) lie on the Cytoplasmic side of the membrane. The chain crosses the membrane as a helical span at residues 216-236 (RLLWLTPLISAIGVVALVVLI). The Periplasmic portion of the chain corresponds to 237–254 (RHPLMPVYIDILRKVVGV).

Belongs to the DedA family.

The protein localises to the cell inner membrane. This chain is Inner membrane protein YabI (yabI), found in Escherichia coli (strain K12).